The following is a 260-amino-acid chain: DNA import protein CedA (260 aa).

The next 6 membrane-spanning stretches (helical) occupy residues Leu-13–Tyr-33, Ile-47–Leu-67, Ala-110–Phe-130, Ile-140–Phe-160, Ala-169–Ala-189, and Ile-220–Met-240.

In terms of assembly, forms a complex composed of CedA, CedA1 and CedA2.

It localises to the cell membrane. In terms of biological role, part of the Ced system, which is involved in DNA import. This Sulfolobus acidocaldarius (strain ATCC 33909 / DSM 639 / JCM 8929 / NBRC 15157 / NCIMB 11770) protein is DNA import protein CedA.